The sequence spans 394 residues: MEKILAINAGSSTLKWQLFEMPSETVIAKGMIDRLGLSDSVFTAKYGDNQKFKEVQDVTTHEMAATLLLTRLKELGIVSHLDEITGVGHRVVGGGEAFSDSMVINPVALDEINRLAEYAPLHNPTQAYYIKIFTALLPGVPQVAVFDTSFYSTLAPENYLYSIPQEYYQTFGARKYGAHGTSHRYVAHRAAEILGTPLESQKMITLHLGSGASITAVQDGHAVDTSMGFTPLAGITMGTRSGDIDVSLVAFLAKKLEITMPEMIDILNHKSGLLGISELSPDMRDLEETAATRPQSALALSIFVNRVVKYVGSYVALMNGIDTLVFTAGSGENGSELRADICKQLACFGVKLDEEKNNVRSQERIISADDSKVKVLIVPTNEELMIARDVMRLK.

Mg(2+) is bound at residue Asn8. Lys15 contributes to the ATP binding site. Substrate is bound at residue Arg90. Asp147 functions as the Proton donor/acceptor in the catalytic mechanism. Residues 207–211 and 282–284 contribute to the ATP site; these read HLGSG and DMR. Glu382 is a Mg(2+) binding site.

It belongs to the acetokinase family. Homodimer. Mg(2+) is required as a cofactor. The cofactor is Mn(2+).

It localises to the cytoplasm. It carries out the reaction acetate + ATP = acetyl phosphate + ADP. It participates in metabolic intermediate biosynthesis; acetyl-CoA biosynthesis; acetyl-CoA from acetate: step 1/2. Its function is as follows. Catalyzes the formation of acetyl phosphate from acetate and ATP. Can also catalyze the reverse reaction. The protein is Acetate kinase 1 of Latilactobacillus sakei subsp. sakei (strain 23K) (Lactobacillus sakei subsp. sakei).